A 630-amino-acid polypeptide reads, in one-letter code: 1-deoxy-D-xylulose-5-phosphate synthase (630 aa).

Thiamine diphosphate contacts are provided by residues His72 and 113–115 (GHS). Asp144 lines the Mg(2+) pocket. Residues 145–146 (GA), Asn173, Tyr284, and Glu367 each bind thiamine diphosphate. Asn173 contributes to the Mg(2+) binding site.

Belongs to the transketolase family. DXPS subfamily. In terms of assembly, homodimer. It depends on Mg(2+) as a cofactor. Thiamine diphosphate is required as a cofactor.

It catalyses the reaction D-glyceraldehyde 3-phosphate + pyruvate + H(+) = 1-deoxy-D-xylulose 5-phosphate + CO2. It participates in metabolic intermediate biosynthesis; 1-deoxy-D-xylulose 5-phosphate biosynthesis; 1-deoxy-D-xylulose 5-phosphate from D-glyceraldehyde 3-phosphate and pyruvate: step 1/1. Its function is as follows. Catalyzes the acyloin condensation reaction between C atoms 2 and 3 of pyruvate and glyceraldehyde 3-phosphate to yield 1-deoxy-D-xylulose-5-phosphate (DXP). In Bacillus mycoides (strain KBAB4) (Bacillus weihenstephanensis), this protein is 1-deoxy-D-xylulose-5-phosphate synthase.